We begin with the raw amino-acid sequence, 177 residues long: ATP synthase subunit delta 1 (177 aa).

Belongs to the ATPase delta chain family. In terms of assembly, F-type ATPases have 2 components, F(1) - the catalytic core - and F(0) - the membrane proton channel. F(1) has five subunits: alpha(3), beta(3), gamma(1), delta(1), epsilon(1). F(0) has three main subunits: a(1), b(2) and c(10-14). The alpha and beta chains form an alternating ring which encloses part of the gamma chain. F(1) is attached to F(0) by a central stalk formed by the gamma and epsilon chains, while a peripheral stalk is formed by the delta and b chains.

The protein localises to the cell inner membrane. F(1)F(0) ATP synthase produces ATP from ADP in the presence of a proton or sodium gradient. F-type ATPases consist of two structural domains, F(1) containing the extramembraneous catalytic core and F(0) containing the membrane proton channel, linked together by a central stalk and a peripheral stalk. During catalysis, ATP synthesis in the catalytic domain of F(1) is coupled via a rotary mechanism of the central stalk subunits to proton translocation. Functionally, this protein is part of the stalk that links CF(0) to CF(1). It either transmits conformational changes from CF(0) to CF(1) or is implicated in proton conduction. This Vibrio campbellii (strain ATCC BAA-1116) protein is ATP synthase subunit delta 1.